Here is a 563-residue protein sequence, read N- to C-terminus: Putative cytochrome c oxidase subunit 1-beta (563 aa).

Helical transmembrane passes span isoleucine 34–leucine 54, leucine 76–phenylalanine 96, methionine 117–proline 137, methionine 164–leucine 184, leucine 208–leucine 228, leucine 252–isoleucine 272, and isoleucine 284–valine 304. A Fe(II)-heme a-binding site is contributed by histidine 80. 2 residues coordinate Cu cation: histidine 258 and tyrosine 262. The segment at residues histidine 258–tyrosine 262 is a cross-link (1'-histidyl-3'-tyrosine (His-Tyr)). Histidine 307 and histidine 308 together coordinate Cu cation. 2 consecutive transmembrane segments (helical) span residues methionine 309 to valine 329 and methionine 353 to leucine 373. Histidine 391 serves as a coordination point for heme a3. 3 helical membrane-spanning segments follow: residues phenylalanine 392–tryptophan 412, isoleucine 427–glycine 447, and leucine 470–tryptophan 490. Fe(II)-heme a is bound at residue histidine 393. Residues alanine 536–serine 563 are disordered. Positions glutamate 552 to serine 563 are enriched in basic and acidic residues.

Belongs to the heme-copper respiratory oxidase family. Associates with subunits II, III and IV to form cytochrome c oxidase. It depends on Cu(2+) as a cofactor. Heme serves as cofactor.

Its subcellular location is the cell membrane. The catalysed reaction is 4 Fe(II)-[cytochrome c] + O2 + 8 H(+)(in) = 4 Fe(III)-[cytochrome c] + 2 H2O + 4 H(+)(out). Its pathway is energy metabolism; oxidative phosphorylation. In terms of biological role, cytochrome c oxidase is the component of the respiratory chain that catalyzes the reduction of oxygen to water. Subunits 1-3 form the functional core of the enzyme complex. CO I is the catalytic subunit of the enzyme. Electrons originating in cytochrome c are transferred via the copper A center of subunit 2 and heme A of subunit 1 to the bimetallic center formed by heme A3 and copper B. The sequence is that of Putative cytochrome c oxidase subunit 1-beta (ctaD2) from Streptomyces avermitilis (strain ATCC 31267 / DSM 46492 / JCM 5070 / NBRC 14893 / NCIMB 12804 / NRRL 8165 / MA-4680).